A 92-amino-acid chain; its full sequence is UPF0213 protein M28_Spy1146 (92 aa).

A GIY-YIG domain is found at 4–80 (KKAYMYVLEC…KRKTRSQKLA (77 aa)).

The protein belongs to the UPF0213 family.

This chain is UPF0213 protein M28_Spy1146, found in Streptococcus pyogenes serotype M28 (strain MGAS6180).